Consider the following 281-residue polypeptide: Diaminopimelate epimerase (281 aa).

Residues asparagine 14 and asparagine 65 each coordinate substrate. The active-site Proton donor is the cysteine 74. Residues 75 to 76, asparagine 165, asparagine 198, and 216 to 217 contribute to the substrate site; these read GN and ER. The Proton acceptor role is filled by cysteine 225. 226 to 227 lines the substrate pocket; it reads GT.

This sequence belongs to the diaminopimelate epimerase family. In terms of assembly, homodimer.

Its subcellular location is the cytoplasm. The catalysed reaction is (2S,6S)-2,6-diaminopimelate = meso-2,6-diaminopimelate. It participates in amino-acid biosynthesis; L-lysine biosynthesis via DAP pathway; DL-2,6-diaminopimelate from LL-2,6-diaminopimelate: step 1/1. Functionally, catalyzes the stereoinversion of LL-2,6-diaminopimelate (L,L-DAP) to meso-diaminopimelate (meso-DAP), a precursor of L-lysine and an essential component of the bacterial peptidoglycan. The protein is Diaminopimelate epimerase of Leptospira interrogans serogroup Icterohaemorrhagiae serovar copenhageni (strain Fiocruz L1-130).